The following is a 1017-amino-acid chain: Peroxisomal ATPase PEX6 (1017 aa).

758–765 (GPPGTGKT) is an ATP binding site.

The protein belongs to the AAA ATPase family. As to quaternary structure, interacts with PEX1; forming the PEX1-PEX6 AAA ATPase complex, which is composed of a heterohexamer formed by a trimer of PEX1-PEX6 dimers.

It localises to the cytoplasm. The protein resides in the cytosol. The protein localises to the peroxisome membrane. It carries out the reaction ATP + H2O = ADP + phosphate + H(+). In terms of biological role, component of the PEX1-PEX6 AAA ATPase complex, a protein dislocase complex that mediates the ATP-dependent extraction of the PEX5 receptor from peroxisomal membranes, an essential step for PEX5 recycling. Specifically recognizes PEX5 monoubiquitinated at 'Cys-6', and pulls it out of the peroxisome lumen through the PEX2-PEX10-PEX12 retrotranslocation channel. Extraction by the PEX1-PEX6 AAA ATPase complex is accompanied by unfolding of the TPR repeats and release of bound cargo from PEX5. In Candida glabrata (strain ATCC 2001 / BCRC 20586 / JCM 3761 / NBRC 0622 / NRRL Y-65 / CBS 138) (Yeast), this protein is Peroxisomal ATPase PEX6 (PEX6).